Here is a 229-residue protein sequence, read N- to C-terminus: Vacuolar protein-sorting-associated protein 60 (229 aa).

Residues 9 to 155 adopt a coiled-coil conformation; sequence NKKSHDQLLQ…QGDELQEVLA (147 aa). Ser12 carries the phosphoserine modification. The tract at residues 128–159 is interaction with VTA1; that stretch reads INIDKLQDMQDEMLDLIEQGDELQEVLAMNNN. The disordered stretch occupies residues 186–229; the sequence is PTSENSLGNDMPSYLLGANAPPAFIDEEPNLDTEDKNKALESAQ. Over residues 218-229 the composition is skewed to basic and acidic residues; the sequence is TEDKNKALESAQ.

The protein belongs to the SNF7 family. In terms of assembly, interacts with VTA1; the interaction occurs at he endosomal membrane.

It localises to the endosome membrane. Its subcellular location is the vacuole membrane. In terms of biological role, has a role in a late stage of multivesicular body (MVB) formation. Can stimulate VPS4 ATPase activity via VTA1. This Saccharomyces cerevisiae (strain ATCC 204508 / S288c) (Baker's yeast) protein is Vacuolar protein-sorting-associated protein 60 (VPS60).